Reading from the N-terminus, the 269-residue chain is Phosphonates import ATP-binding protein PhnC (269 aa).

Residues 8-251 (IHLYGASLRH…LLDALYANEQ (244 aa)) enclose the ABC transporter domain. 40–47 (GPSGAGKS) lines the ATP pocket.

The protein belongs to the ABC transporter superfamily. Phosphonates importer (TC 3.A.1.9.1) family. As to quaternary structure, the complex is composed of two ATP-binding proteins (PhnC), two transmembrane proteins (PhnE) and a solute-binding protein (PhnD).

The protein localises to the cell inner membrane. It catalyses the reaction phosphonate(out) + ATP + H2O = phosphonate(in) + ADP + phosphate + H(+). Part of the ABC transporter complex PhnCDE involved in phosphonates import. Responsible for energy coupling to the transport system. This Pseudomonas putida (strain ATCC 47054 / DSM 6125 / CFBP 8728 / NCIMB 11950 / KT2440) protein is Phosphonates import ATP-binding protein PhnC.